We begin with the raw amino-acid sequence, 728 residues long: Rho-related BTB domain-containing protein 2 (728 aa).

Residues 1 to 210 are rho-like; sequence MDSDMDYERP…DNAIRAALIS (210 aa). Residues 21–28, 84–88, and 140–143 each bind GTP; these read GDNAVGKT, DTFGD, and CQLD. BTB domains lie at 266 to 333 and 500 to 567; these read ADVI…HHHH and SDVT…TSSP. Gly residues predominate over residues 304–313; that stretch reads ELGGPSGSGG. The disordered stretch occupies residues 304–333; the sequence is ELGGPSGSGGPRPEDHRSHPEQHHHHHHHH. The span at 315–324 shows a compositional bias: basic and acidic residues; sequence RPEDHRSHPE. Positions 703–728 are disordered; the sequence is FWNSPSSPSSSAAGSASPSSSSSAVV. Over residues 706-728 the composition is skewed to low complexity; sequence SPSSPSSSAAGSASPSSSSSAVV.

This sequence belongs to the small GTPase superfamily. Rho family. Interacts with HSP90AA1 and HSP90AB1. Forms a complex with CUL3 and RBX1. Interacts (via BTB 1 domain) with CUL3. Interacts with MSI2. Post-translationally, autoubiquitinated by RHOBTB2-CUL3-RBX1 ubiquitin ligase complex. In terms of tissue distribution, expressed in most tissues, with highest expression in brain.

Regulator of cell proliferation and apoptosis. It likely functions as a substrate-adapter that recruits key substrates, e.g. MSI2, to CUL3-based ubiquitin ligase complexes for degradation. Required for MSI2 ubiquitination and degradation. This Mus musculus (Mouse) protein is Rho-related BTB domain-containing protein 2 (Rhobtb2).